Here is a 298-residue protein sequence, read N- to C-terminus: MKPIAAFQEYLEVERQYSPETVTAYLSDLQEFQAFLKANGGFTDFRHVDDLDVQTYLTDLNKQDLARTSIARKISSLRSFYRYLTRIDVVKRNPFELVELKKQHHHLPQFFYEAEIQELFKTVAGKTPLDQRNRALLEVLYGTGIRVSECAKLTLNQVDFNTALLLIHGKGNKDRYVPFGQYAQQALRTYLKDGRQVLMAKSQAQHRYVFVNQYGRPITSRGIEYILDQLIKQTTLTANIHPHMLRHSFATHMLDHGADLRTVQELLGHASLSTTQIYTHVTMAHLKNEYMKYYPKHN.

The region spanning 1–85 (MKPIAAFQEY…SLRSFYRYLT (85 aa)) is the Core-binding (CB) domain. Positions 106–291 (HLPQFFYEAE…TMAHLKNEYM (186 aa)) constitute a Tyr recombinase domain. Residues R146, K170, H243, R246, and H269 contribute to the active site. Y278 (O-(3'-phospho-DNA)-tyrosine intermediate) is an active-site residue.

It belongs to the 'phage' integrase family. XerC subfamily. As to quaternary structure, forms a cyclic heterotetrameric complex composed of two molecules of XerC and two molecules of XerD.

It is found in the cytoplasm. Its function is as follows. Site-specific tyrosine recombinase, which acts by catalyzing the cutting and rejoining of the recombining DNA molecules. The XerC-XerD complex is essential to convert dimers of the bacterial chromosome into monomers to permit their segregation at cell division. It also contributes to the segregational stability of plasmids. The protein is Tyrosine recombinase XerC of Lacticaseibacillus paracasei (strain ATCC 334 / BCRC 17002 / CCUG 31169 / CIP 107868 / KCTC 3260 / NRRL B-441) (Lactobacillus paracasei).